The primary structure comprises 284 residues: L-ribulose-5-phosphate 3-epimerase UlaE (284 aa).

Belongs to the L-ribulose-5-phosphate 3-epimerase family.

The catalysed reaction is L-ribulose 5-phosphate = L-xylulose 5-phosphate. It participates in cofactor degradation; L-ascorbate degradation; D-xylulose 5-phosphate from L-ascorbate: step 3/4. Its function is as follows. Catalyzes the isomerization of L-xylulose-5-phosphate to L-ribulose-5-phosphate. Is involved in the anaerobic L-ascorbate utilization. The polypeptide is L-ribulose-5-phosphate 3-epimerase UlaE (Salmonella paratyphi A (strain AKU_12601)).